Reading from the N-terminus, the 1067-residue chain is Carbamoyl phosphate synthase large chain (1067 aa).

A carboxyphosphate synthetic domain region spans residues 1–401 (MPLNKDIKKV…AFLKGIRSLE (401 aa)). Positions 129, 169, 175, 176, 208, 210, 215, 241, 242, 243, 284, and 298 each coordinate ATP. Positions 133 to 327 (RDMMNRINQP…IAKVAAKIAL (195 aa)) constitute an ATP-grasp 1 domain. Gln-284, Glu-298, and Asn-300 together coordinate Mg(2+). Residues Gln-284, Glu-298, and Asn-300 each contribute to the Mn(2+) site. An oligomerization domain region spans residues 402-549 (IGKYSLEHKK…YSTYEQYDEV (148 aa)). The carbamoyl phosphate synthetic domain stretch occupies residues 550–932 (VVSDNKKVVV…ALYKGFVGAS (383 aa)). In terms of domain architecture, ATP-grasp 2 spans 674 to 864 (DDLLERLNIA…IVDIATRIML (191 aa)). ATP-binding residues include Arg-710, Lys-749, Leu-751, Glu-755, Gly-780, Val-781, His-782, Ser-783, Gln-823, and Glu-835. Positions 823, 835, and 837 each coordinate Mg(2+). Mn(2+) contacts are provided by Gln-823, Glu-835, and Asn-837. The region spanning 933-1067 (MYTGDKGKTI…NRELEVFNLI (135 aa)) is the MGS-like domain. An allosteric domain region spans residues 933–1067 (MYTGDKGKTI…NRELEVFNLI (135 aa)).

The protein belongs to the CarB family. In terms of assembly, composed of two chains; the small (or glutamine) chain promotes the hydrolysis of glutamine to ammonia, which is used by the large (or ammonia) chain to synthesize carbamoyl phosphate. Tetramer of heterodimers (alpha,beta)4. It depends on Mg(2+) as a cofactor. Mn(2+) serves as cofactor.

The catalysed reaction is hydrogencarbonate + L-glutamine + 2 ATP + H2O = carbamoyl phosphate + L-glutamate + 2 ADP + phosphate + 2 H(+). It catalyses the reaction hydrogencarbonate + NH4(+) + 2 ATP = carbamoyl phosphate + 2 ADP + phosphate + 2 H(+). It participates in amino-acid biosynthesis; L-arginine biosynthesis; carbamoyl phosphate from bicarbonate: step 1/1. The protein operates within pyrimidine metabolism; UMP biosynthesis via de novo pathway; (S)-dihydroorotate from bicarbonate: step 1/3. Its function is as follows. Large subunit of the glutamine-dependent carbamoyl phosphate synthetase (CPSase). CPSase catalyzes the formation of carbamoyl phosphate from the ammonia moiety of glutamine, carbonate, and phosphate donated by ATP, constituting the first step of 2 biosynthetic pathways, one leading to arginine and/or urea and the other to pyrimidine nucleotides. The large subunit (synthetase) binds the substrates ammonia (free or transferred from glutamine from the small subunit), hydrogencarbonate and ATP and carries out an ATP-coupled ligase reaction, activating hydrogencarbonate by forming carboxy phosphate which reacts with ammonia to form carbamoyl phosphate. The polypeptide is Carbamoyl phosphate synthase large chain (Clostridium perfringens (strain SM101 / Type A)).